The chain runs to 149 residues: Envelope glycoprotein UL4 (149 aa).

An N-terminal signal peptide occupies residues 1 to 18; sequence MMLRTWISLPMVLLDAYC. Residues Asn46, Asn51, Asn59, Asn67, Asn105, Asn109, Asn119, Asn136, and Asn145 are each glycosylated (N-linked (GlcNAc...) asparagine; by host).

It belongs to the RL11 family. Post-translationally, N-glycosylated and possibly O-glycosylated.

The protein localises to the virion membrane. The chain is Envelope glycoprotein UL4 (UL4) from Human cytomegalovirus (strain Merlin) (HHV-5).